Reading from the N-terminus, the 177-residue chain is Cyclic pyranopterin monophosphate synthase (177 aa).

Residues 89–91 (LCH) and 125–126 (ME) each bind substrate. Asp-140 is a catalytic residue.

The protein belongs to the MoaC family. In terms of assembly, homohexamer; trimer of dimers.

The catalysed reaction is (8S)-3',8-cyclo-7,8-dihydroguanosine 5'-triphosphate = cyclic pyranopterin phosphate + diphosphate. It participates in cofactor biosynthesis; molybdopterin biosynthesis. Functionally, catalyzes the conversion of (8S)-3',8-cyclo-7,8-dihydroguanosine 5'-triphosphate to cyclic pyranopterin monophosphate (cPMP). The polypeptide is Cyclic pyranopterin monophosphate synthase (Streptomyces griseus subsp. griseus (strain JCM 4626 / CBS 651.72 / NBRC 13350 / KCC S-0626 / ISP 5235)).